Reading from the N-terminus, the 127-residue chain is MYAVFQIGSKQYYVRTGQVIFIDRVKLDIGNQIEFNQVLLIRDMKNIYIGNPFIQNGKIIADILDHSLGKKIRIVKFRRRKHFRKFQGHRQCMTKIKVVKINSNNSDIECYKSVDIETKIGEEVHGA.

Belongs to the bacterial ribosomal protein bL21 family. As to quaternary structure, part of the 50S ribosomal subunit. Contacts protein L20.

This protein binds to 23S rRNA in the presence of protein L20. This Blochmanniella floridana protein is Large ribosomal subunit protein bL21.